The sequence spans 255 residues: MAVGKNKRLSRGKKGLKKKVVDPFTRKEWFDIKAPSTFENRNVGKTLVNKSTGLKNASDALKGRVVEVCLADLQGSEDHSFRKVKLRVDEVQGKNLLTNFHGMDFTTDKLRSMVRKWQTLIEANVTVKTSDDYVLRIFAIAFTRKQANQVKRHSYAQSSHIRAIRKVISEILTREVQNSTLAQLTSKLIPEVINKEIENATKDIFPLQNIHVRKVKLLKQPKFDVGALMALHGEGSGEEKGKKVSGFKDEVLETV.

Ala2 bears the N-acetylalanine; partial mark. Ser245 carries the phosphoserine modification. A Glycyl lysine isopeptide (Lys-Gly) (interchain with G-Cter in ubiquitin) cross-link involves residue Lys248. Thr254 is subject to Phosphothreonine.

The protein belongs to the eukaryotic ribosomal protein eS1 family. In terms of assembly, component of the small ribosomal subunit. Mature ribosomes consist of a small (40S) and a large (60S) subunit. The 40S subunit contains about 33 different proteins and 1 molecule of RNA (18S). The 60S subunit contains about 49 different proteins and 3 molecules of RNA (25S, 5.8S and 5S).

The protein localises to the cytoplasm. The protein is Small ribosomal subunit protein eS1B of Saccharomyces cerevisiae (strain RM11-1a) (Baker's yeast).